The primary structure comprises 338 residues: dTDP-glucose 4,6-dehydratase (338 aa).

NAD(+) contacts are provided by residues 12 to 13, 33 to 36, 59 to 60, 81 to 85, and threonine 100; these read FI, DKLT, DI, and LAAES. Serine 85 is a binding site for substrate. Position 134 (threonine 134) interacts with substrate. Residue aspartate 135 is the Proton donor of the active site. Active-site proton acceptor residues include glutamate 136 and tyrosine 160. Residue 160-164 participates in NAD(+) binding; that stretch reads YSASK. A substrate-binding site is contributed by asparagine 189. NAD(+) is bound at residue asparagine 190. Substrate is bound by residues 199–200, 215–217, arginine 224, asparagine 259, and 293–297; these read KL, PIY, and DRPGH.

This sequence belongs to the NAD(P)-dependent epimerase/dehydratase family. dTDP-glucose dehydratase subfamily. As to quaternary structure, homodimer. The cofactor is NAD(+).

The enzyme catalyses dTDP-alpha-D-glucose = dTDP-4-dehydro-6-deoxy-alpha-D-glucose + H2O. Its pathway is carbohydrate biosynthesis; dTDP-L-rhamnose biosynthesis. The protein operates within bacterial outer membrane biogenesis; LPS O-antigen biosynthesis. Functionally, catalyzes the dehydration of dTDP-D-glucose to form dTDP-6-deoxy-D-xylo-4-hexulose via a three-step process involving oxidation, dehydration and reduction. The protein is dTDP-glucose 4,6-dehydratase (rffG) of Haemophilus influenzae (strain ATCC 51907 / DSM 11121 / KW20 / Rd).